The sequence spans 419 residues: L-rhamnose isomerase (419 aa).

H262, D294, and D296 together coordinate Mn(2+).

Belongs to the rhamnose isomerase family. In terms of assembly, homotetramer. Mn(2+) serves as cofactor.

It localises to the cytoplasm. The enzyme catalyses L-rhamnopyranose = L-rhamnulose. Its pathway is carbohydrate degradation; L-rhamnose degradation; glycerone phosphate from L-rhamnose: step 1/3. Its function is as follows. Catalyzes the interconversion of L-rhamnose and L-rhamnulose. The protein is L-rhamnose isomerase of Escherichia coli (strain 55989 / EAEC).